The primary structure comprises 94 residues: Pyrimidine/purine nucleoside phosphorylase (94 aa).

Belongs to the nucleoside phosphorylase PpnP family.

It catalyses the reaction a purine D-ribonucleoside + phosphate = a purine nucleobase + alpha-D-ribose 1-phosphate. The catalysed reaction is adenosine + phosphate = alpha-D-ribose 1-phosphate + adenine. The enzyme catalyses cytidine + phosphate = cytosine + alpha-D-ribose 1-phosphate. It carries out the reaction guanosine + phosphate = alpha-D-ribose 1-phosphate + guanine. It catalyses the reaction inosine + phosphate = alpha-D-ribose 1-phosphate + hypoxanthine. The catalysed reaction is thymidine + phosphate = 2-deoxy-alpha-D-ribose 1-phosphate + thymine. The enzyme catalyses uridine + phosphate = alpha-D-ribose 1-phosphate + uracil. It carries out the reaction xanthosine + phosphate = alpha-D-ribose 1-phosphate + xanthine. In terms of biological role, catalyzes the phosphorolysis of diverse nucleosides, yielding D-ribose 1-phosphate and the respective free bases. Can use uridine, adenosine, guanosine, cytidine, thymidine, inosine and xanthosine as substrates. Also catalyzes the reverse reactions. This Pseudomonas fluorescens (strain Pf0-1) protein is Pyrimidine/purine nucleoside phosphorylase.